The following is a 204-amino-acid chain: 3-isopropylmalate dehydratase small subunit (204 aa).

The protein belongs to the LeuD family. LeuD type 1 subfamily. As to quaternary structure, heterodimer of LeuC and LeuD.

It catalyses the reaction (2R,3S)-3-isopropylmalate = (2S)-2-isopropylmalate. Its pathway is amino-acid biosynthesis; L-leucine biosynthesis; L-leucine from 3-methyl-2-oxobutanoate: step 2/4. Its function is as follows. Catalyzes the isomerization between 2-isopropylmalate and 3-isopropylmalate, via the formation of 2-isopropylmaleate. This Psychromonas ingrahamii (strain DSM 17664 / CCUG 51855 / 37) protein is 3-isopropylmalate dehydratase small subunit.